The following is a 704-amino-acid chain: Neutral ceramidase (704 aa).

The N-terminal stretch at 1–23 is a signal peptide; sequence MAISKIAFLALIALSGLCGLASA. Asn230 is a glycosylation site (N-linked (GlcNAc...) asparagine). Catalysis depends on Ser276, which acts as the Nucleophile. N-linked (GlcNAc...) asparagine glycans are attached at residues Asn362, Asn550, and Asn598.

It belongs to the neutral ceramidase family. Post-translationally, N-glycosylated.

The protein resides in the secreted. It carries out the reaction an N-acylsphing-4-enine + H2O = sphing-4-enine + a fatty acid. Its function is as follows. Hydrolyzes the sphingolipid ceramide into sphingosine and free fatty acid at an optimal pH of 6.5-7.5. Acts as a key regulator of sphingolipid signaling metabolites by generating sphingosine at the cell surface. This is Neutral ceramidase (CDase) from Drosophila pseudoobscura pseudoobscura (Fruit fly).